Here is a 52-residue protein sequence, read N- to C-terminus: Superoxide dismutase [Cu-Zn] 2 (52 aa).

A Cu cation-binding site is contributed by H44.

This sequence belongs to the Cu-Zn superoxide dismutase family. Homodimer. The cofactor is Cu cation. Zn(2+) is required as a cofactor.

It localises to the cytoplasm. It catalyses the reaction 2 superoxide + 2 H(+) = H2O2 + O2. Functionally, destroys radicals which are normally produced within the cells and which are toxic to biological systems. This chain is Superoxide dismutase [Cu-Zn] 2, found in Debaryomyces hansenii (Yeast).